Consider the following 437-residue polypeptide: MGAVLKAEANIFRSHPFRPMNQATPKKLRSAPCIGVALLLMATGSIQAAEAPPYSVLLQQSLAMAPTMMVQAANVRAAGADAAQARAWLNPRFDTLAENLGAPSSGGQSQRQNTYSITQPFEIGGKRGARIEVGERNYEAAQARERQLRVNYAAELAVAYATAEAAFGRQALAEENLALANEELTVARALVETGKEATLRTAQAQASVSAAQAIEAAASSDVTSTLARLSALSGATEAYTGISSSLLSAQPAMTPGGTTTDDSPAVRTAEAERNAFDAQVNVERKRWIPEVGITAGVRRYGWSNESGYIVGLTASIPLFDRNRNGIDAAVQRVAAAQARLDTVRLEANAARRSAVSQVAATDKQLAAASQGEQAASEAYRVGRLGYEAGKTPLVELLAVRRALVDARQLTIDARLARVRALAALAQADGRLAFEESR.

A signal peptide spans methionine 1 to alanine 48.

Belongs to the outer membrane factor (OMF) (TC 1.B.17) family.

In terms of biological role, component of the NCC cation-efflux system that confers resistance to nickel, cobalt and cadmium. This Alcaligenes xylosoxydans xylosoxydans (Achromobacter xylosoxidans) protein is Nickel-cobalt-cadmium resistance protein NccC (nccC).